Consider the following 769-residue polypeptide: Scarecrow-like protein 14 (769 aa).

Disordered stretches follow at residues 1 to 23 (MGSY…DFDL), 128 to 157 (PSSS…GAFS), 279 to 320 (TEKK…ERSN), and 364 to 388 (TAQS…DSKK). One can recognise a GRAS domain in the interval 384–765 (NDSKKETADL…RIVYASSLWV (382 aa)). The leucine repeat I (LRI) stretch occupies residues 391 to 451 (ADLRTLLVLC…EARLAGTGTQ (61 aa)). The tract at residues 470–536 (YQTYMSVCPF…GGSPKLRITG (67 aa)) is VHIID. The VHIID signature appears at 501 to 505 (IHIID). Positions 552 to 584 (ETGHRLARYCQRHNVPFEYNAIAQKWETIQVED) are leucine repeat II (LRII). Positions 593–687 (VVVNSLFRFR…KEFYGREIVN (95 aa)) are PFYRE. An SAW region spans residues 690–765 (ACEGTERVER…RIVYASSLWV (76 aa)).

Belongs to the GRAS family. In terms of tissue distribution, expressed in roots, shoots, flowers and siliques.

The protein resides in the nucleus. Probable transcription factor involved in plant development. The sequence is that of Scarecrow-like protein 14 (SCL14) from Arabidopsis thaliana (Mouse-ear cress).